Here is a 272-residue protein sequence, read N- to C-terminus: Cerberus (272 aa).

A signal peptide spans 1–19 (MSLLLLQLLVLSCLGDTEP). 4 disulfides stabilise this stretch: Cys168–Cys215, Cys182–Cys229, Cys192–Cys245, and Cys196–Cys247. Residues 168–253 (CRTLPFSQSV…ECNCETQKIE (86 aa)) form the CTCK domain. The N-linked (GlcNAc...) asparagine glycan is linked to Asn228.

Belongs to the DAN family.

It is found in the secreted. Its function is as follows. Cytokine that acts as a regulator of the activity of Nodal/BMP pathways during the establishment of bilateral asymmetry in the head and trunk of the embryo. The polypeptide is Cerberus (CER1) (Gallus gallus (Chicken)).